A 349-amino-acid chain; its full sequence is Fructose-1,6-bisphosphatase class 1 (349 aa).

Mg(2+)-binding residues include Glu-92, Asp-113, Leu-115, and Asp-116. Residues 116–119 (DGSS), Asn-209, Tyr-242, and Lys-272 contribute to the substrate site. Glu-278 contributes to the Mg(2+) binding site.

It belongs to the FBPase class 1 family. In terms of assembly, homotetramer. Requires Mg(2+) as cofactor.

The protein localises to the cytoplasm. It carries out the reaction beta-D-fructose 1,6-bisphosphate + H2O = beta-D-fructose 6-phosphate + phosphate. Its pathway is carbohydrate biosynthesis; Calvin cycle. The polypeptide is Fructose-1,6-bisphosphatase class 1 (Chloroherpeton thalassium (strain ATCC 35110 / GB-78)).